The sequence spans 196 residues: MSRYRGPRFKKIRRLGALPGLTRKTPKSGSNLKKKFHSGKKEQYRIRLQEKQKLRFHYGLTERQLLRYVHIAGKAKRSTGQVLLQLLEMRLDNILFRLGMASTIPEARQLVNHRHILVNRRIVDIPSFRCKPRDIITTKDNQRSKCLVQNSIASSDPGKLPKHLTIDTLQYKGLVKKILDRKWVGLKINELLVVEY.

Residues 20–39 (GLTRKTPKSGSNLKKKFHSG) form a disordered region. An S4 RNA-binding domain is found at 89 to 152 (MRLDNILFRL…RSKCLVQNSI (64 aa)).

Belongs to the universal ribosomal protein uS4 family. Part of the 30S ribosomal subunit. Contacts protein S5. The interaction surface between S4 and S5 is involved in control of translational fidelity.

It is found in the plastid. Its subcellular location is the chloroplast. In terms of biological role, one of the primary rRNA binding proteins, it binds directly to 16S rRNA where it nucleates assembly of the body of the 30S subunit. Its function is as follows. With S5 and S12 plays an important role in translational accuracy. This Dendrocalamus giganteus (Giant bamboo) protein is Small ribosomal subunit protein uS4c (rps4).